The primary structure comprises 220 residues: Deoxyribose-phosphate aldolase (220 aa).

Catalysis depends on Asp-89, which acts as the Proton donor/acceptor. Residue Lys-151 is the Schiff-base intermediate with acetaldehyde of the active site. The active-site Proton donor/acceptor is the Lys-180.

Belongs to the DeoC/FbaB aldolase family. DeoC type 1 subfamily.

It localises to the cytoplasm. The enzyme catalyses 2-deoxy-D-ribose 5-phosphate = D-glyceraldehyde 3-phosphate + acetaldehyde. Its pathway is carbohydrate degradation; 2-deoxy-D-ribose 1-phosphate degradation; D-glyceraldehyde 3-phosphate and acetaldehyde from 2-deoxy-alpha-D-ribose 1-phosphate: step 2/2. In terms of biological role, catalyzes a reversible aldol reaction between acetaldehyde and D-glyceraldehyde 3-phosphate to generate 2-deoxy-D-ribose 5-phosphate. In Thermus thermophilus (strain ATCC BAA-163 / DSM 7039 / HB27), this protein is Deoxyribose-phosphate aldolase.